A 307-amino-acid chain; its full sequence is Serine/threonine-protein phosphatase PP2A-5 catalytic subunit (307 aa).

Positions 55, 57, 83, and 115 each coordinate Mn(2+). The active-site Proton donor is the His-116. Residues His-165 and His-239 each coordinate Mn(2+). Leucine methyl ester is present on Leu-307.

The protein belongs to the PPP phosphatase family. PP-2A subfamily. As to quaternary structure, PP2A consists of a common heterodimeric core enzyme, composed of a 36 kDa catalytic subunit (subunit C) and a 65 kDa constant regulatory subunit (subunit A), that associates with a variety of regulatory subunits such as subunits B (the R2/B/PR55/B55, R3/B''/PR72/PR130/PR59 and R5/B'/B56 families). Also interacts with CHIP and TAF12B. Interacts with B'THETA. Interacts with CLC-A, CLC-B, CLC-C and CLC-G. Mn(2+) is required as a cofactor. Reversibly methyl esterified on Leu-307 by leucine carboxyl methyltransferase 1 (LCMT1) and pectin methylesterase 1 (PME1). Carboxyl methylation influences the affinity of the catalytic subunit for the different regulatory subunits, thereby modulating the PP2A holoenzyme's substrate specificity, enzyme activity and cellular localization. In terms of processing, phosphorylation of either threonine (by autophosphorylation-activated protein kinase) or tyrosine results in inactivation of the phosphatase. Auto-dephosphorylation has been suggested as a mechanism for reactivation. Post-translationally, ubiquitinated. CHIP-mediated ubiquitination enhances phosphatase activity after an abiotic stress such as low temperature or darkness.

The protein resides in the cytoplasm. Its subcellular location is the cytosol. It is found in the peroxisome. It carries out the reaction O-phospho-L-seryl-[protein] + H2O = L-seryl-[protein] + phosphate. The enzyme catalyses O-phospho-L-threonyl-[protein] + H2O = L-threonyl-[protein] + phosphate. Associates with the serine/threonine-protein phosphatase PP2A regulatory subunits A and B' to positively regulates beta-oxidation of fatty acids and protoauxins in peroxisomes by dephosphorylating peroxisomal beta-oxidation-related proteins. Involved in the positive regulation of salt stress responses. May function by increasing chloride channel activities on vacuolar membranes. The chain is Serine/threonine-protein phosphatase PP2A-5 catalytic subunit from Arabidopsis thaliana (Mouse-ear cress).